Here is a 359-residue protein sequence, read N- to C-terminus: Phosphatidylglycerol--prolipoprotein diacylglyceryl transferase (359 aa).

Transmembrane regions (helical) follow at residues 24 to 44, 58 to 78, 98 to 118, and 124 to 144; these read VALR…IVWG, VLDI…LYHV, VWQG…GAWI, and GIPL…AQAI. Position 146 (arginine 146) interacts with a 1,2-diacyl-sn-glycero-3-phospho-(1'-sn-glycerol). 3 helical membrane-spanning segments follow: residues 193 to 213, 222 to 243, and 258 to 278; these read FVVH…VLLL, IGHG…FWIE, and VNSF…FAAT. The tract at residues 284-359 is disordered; it reads PAELRPADGG…IDSKKDDAND (76 aa). Residues 306-323 are compositionally biased toward basic and acidic residues; it reads IAQKEPEKNVEDAGKDEG. Positions 336-349 are enriched in low complexity; that stretch reads ASTASTGGEAGTKT. Over residues 350–359 the composition is skewed to basic and acidic residues; sequence IDSKKDDAND.

Belongs to the Lgt family.

Its subcellular location is the cell membrane. The enzyme catalyses L-cysteinyl-[prolipoprotein] + a 1,2-diacyl-sn-glycero-3-phospho-(1'-sn-glycerol) = an S-1,2-diacyl-sn-glyceryl-L-cysteinyl-[prolipoprotein] + sn-glycerol 1-phosphate + H(+). The protein operates within protein modification; lipoprotein biosynthesis (diacylglyceryl transfer). Its function is as follows. Catalyzes the transfer of the diacylglyceryl group from phosphatidylglycerol to the sulfhydryl group of the N-terminal cysteine of a prolipoprotein, the first step in the formation of mature lipoproteins. This chain is Phosphatidylglycerol--prolipoprotein diacylglyceryl transferase, found in Rhodococcus jostii (strain RHA1).